The sequence spans 378 residues: Quinolinate synthase (378 aa).

The iminosuccinate site is built by His59 and Ser80. Cys125 is a binding site for [4Fe-4S] cluster. Iminosuccinate contacts are provided by residues 151–153 (YAN) and Ser168. Cys212 provides a ligand contact to [4Fe-4S] cluster. Residues 238–240 (HPE) and Thr255 contribute to the iminosuccinate site. Cys309 is a [4Fe-4S] cluster binding site.

This sequence belongs to the quinolinate synthase family. Type 1 subfamily. It depends on [4Fe-4S] cluster as a cofactor.

It localises to the cytoplasm. The enzyme catalyses iminosuccinate + dihydroxyacetone phosphate = quinolinate + phosphate + 2 H2O + H(+). It participates in cofactor biosynthesis; NAD(+) biosynthesis; quinolinate from iminoaspartate: step 1/1. Its function is as follows. Catalyzes the condensation of iminoaspartate with dihydroxyacetone phosphate to form quinolinate. The protein is Quinolinate synthase of Burkholderia thailandensis (strain ATCC 700388 / DSM 13276 / CCUG 48851 / CIP 106301 / E264).